The primary structure comprises 625 residues: TORTIFOLIA1-like protein 4 (625 aa).

The segment at Met1 to Asp34 is disordered. Over residues Pro12–Pro29 the composition is skewed to low complexity. 5 HEAT repeats span residues Asp69 to Asp106, Pro110 to Arg147, Pro149 to Asp186, Glu190 to Ala227, and Lys230 to Leu268. Residues Ser391 to Glu466 form a disordered region. 3 stretches are compositionally biased toward basic and acidic residues: residues Lys404 to Ala413, Ile420 to Lys434, and Asp455 to Glu466. Ser475 carries the post-translational modification Phosphoserine. The tract at residues Gly582–Thr625 is disordered. Over residues Met612–Thr625 the composition is skewed to polar residues.

The protein is TORTIFOLIA1-like protein 4 of Arabidopsis thaliana (Mouse-ear cress).